We begin with the raw amino-acid sequence, 550 residues long: Carboxypeptidase Y homolog A (550 aa).

The N-terminal stretch at 1 to 18 is a signal peptide; that stretch reads MKSLVLGLLVGSAIASGP. A propeptide spanning residues 19 to 131 is cleaved from the precursor; the sequence is LQHVLHAPPD…KLSQYDLRIK (113 aa). Positions 20–39 are disordered; the sequence is QHVLHAPPDPEPKPEPEPQV. Intrachain disulfides connect C185/C424, C319/C333, C343/C366, C350/C359, and C388/C394. N203 and N216 each carry an N-linked (GlcNAc...) asparagine glycan. Residue S272 is part of the active site. Residue N289 is glycosylated (N-linked (GlcNAc...) asparagine). A glycan (N-linked (GlcNAc...) asparagine) is linked at N387. Residue D463 is part of the active site. N-linked (GlcNAc...) asparagine glycans are attached at residues N493 and N514. Residue H525 is part of the active site.

This sequence belongs to the peptidase S10 family.

The protein localises to the vacuole. The enzyme catalyses Release of a C-terminal amino acid with broad specificity.. Its function is as follows. Vacuolar carboxypeptidase involved in degradation of small peptides. Digests preferentially peptides containing an aliphatic or hydrophobic residue in P1' position, as well as methionine, leucine or phenylalanine in P1 position of ester substrate. This is Carboxypeptidase Y homolog A (CPYA) from Paracoccidioides brasiliensis (strain Pb18).